The chain runs to 279 residues: Large ribosomal subunit protein uL2 (279 aa).

2 disordered regions span residues 32–53 (SLLR…TTRH) and 225–279 (AMNP…KKRK). Residues 253–268 (KEGRTRHINKPSDKLI) are compositionally biased toward basic and acidic residues. A compositionally biased stretch (basic residues) spans 269-279 (VRRRNAGKKRK).

This sequence belongs to the universal ribosomal protein uL2 family. Part of the 50S ribosomal subunit. Forms a bridge to the 30S subunit in the 70S ribosome.

One of the primary rRNA binding proteins. Required for association of the 30S and 50S subunits to form the 70S ribosome, for tRNA binding and peptide bond formation. It has been suggested to have peptidyltransferase activity; this is somewhat controversial. Makes several contacts with the 16S rRNA in the 70S ribosome. In Clavibacter michiganensis subsp. michiganensis (strain NCPPB 382), this protein is Large ribosomal subunit protein uL2.